We begin with the raw amino-acid sequence, 492 residues long: Fascin-2 (492 aa).

It belongs to the fascin family. Expressed in the inner ear. Abundant in the utricle.

It localises to the cytoplasm. The protein resides in the cytoskeleton. Its subcellular location is the cell projection. It is found in the stereocilium. In terms of biological role, acts as an actin bundling protein. May play a pivotal role in photoreceptor cell-specific events, such as disk morphogenesis. Important for maintaining functional hair-cell bundles in the inner ear. May stiffen the longer stereocilia of hair-cell bundles in the inner ear enabling better force transmission to tip links. This Mus musculus (Mouse) protein is Fascin-2 (Fscn2).